Reading from the N-terminus, the 158-residue chain is EOLA-like protein (158 aa).

Positions 6–92 constitute an ASCH domain; sequence LSFRQPYAGF…IAGLVDIGET (87 aa).

This sequence belongs to the EOLA family.

The protein is EOLA-like protein of Pongo abelii (Sumatran orangutan).